An 813-amino-acid polypeptide reads, in one-letter code: Ribonuclease R (813 aa).

Residues 260–587 (RVDLRDLPLV…LHRAIKYLLA (328 aa)) enclose the RNB domain. An N6-acetyllysine; by PatZ modification is found at Lys-544. The S1 motif domain maps to 644–725 (GNVFKGVISS…DERKIDFSLI (82 aa)). The segment at 731–813 (PRNVGKTARE…KRAAKKKVAE (83 aa)) is disordered. Basic and acidic residues-rich tracts occupy residues 737 to 749 (TARE…DAGK) and 761 to 774 (VNFE…GEKK). A compositionally biased stretch (basic residues) spans 775-791 (TKPKAAKKDARKAKKPS). A compositionally biased stretch (low complexity) spans 792-801 (AKTQKIAAAT). The span at 802–813 (KAKRAAKKKVAE) shows a compositional bias: basic residues.

Belongs to the RNR ribonuclease family. RNase R subfamily. Monomer. Requires Mg(2+) as cofactor. In terms of processing, acetylated at Lys-544 by PatZ during exponential growth phase. Acetylation alters RNase R structure and enhances binding of SsrA/tmRNA and SmpB, leading to instability and degradation of RNase R. Not acetylated and stable in stationary phase cells.

The protein resides in the cytoplasm. It carries out the reaction Exonucleolytic cleavage in the 3'- to 5'-direction to yield nucleoside 5'-phosphates.. Stimulated by the presence of a monovalent cation. Highly unstable in exponential growth phase. This instability is due to the binding of SsrA/tmRNA and its associated protein SmpB to the C-terminal region of RNase R. In contrast, RNase R becomes stabilized upon entry into stationary phase. The difference in stability between exponential and stationary phase is due to the acetylation of a single lysine residue. Its function is as follows. 3'-5' exoribonuclease that releases 5'-nucleoside monophosphates and is involved in maturation of structured RNAs (rRNAs, tRNAs and SsrA/tmRNA). In stationary phase, involved in the post-transcriptional regulation of ompA mRNA stability. Shortens RNA processively to di- and trinucleotides. In vitro, exhibits helicase activity, which is independent of its RNase activity. RNases 2 and R (rnb and this entry) contribute to rRNA degradation during starvation, while RNase R and PNPase (this entry and pnp) are the major contributors to quality control of rRNA during steady state growth. Required for the expression of virulence genes in enteroinvasive strains of E.coli. The sequence is that of Ribonuclease R (rnr) from Escherichia coli (strain K12).